The chain runs to 251 residues: Cytochrome P450 monooxygenase ppzG (251 aa).

Cysteine 250 serves as a coordination point for heme.

Belongs to the cytochrome P450 family. Requires heme as cofactor.

The protein operates within secondary metabolite biosynthesis. Cytochrome P450 monooxygenase; part of the gene cluster that mediates the biosynthesis of pyrrolopyrazines, secondary metabolites showing insecticidal activity. The role of ppzG within the pathway has still to be determined. The single multifunctional NRPS ppzA is sufficient to produce peramine via condensation of 1-pyrroline-5-carboxylate and arginine, N-methylation of the alpha-amino group of arginine and reduction of the thioester and the cyclization to form an iminium ion resulting in release from the peptide synthetase. Deprotonation of this intermediate and oxidation of the pyrroline ring would give rise to peramine. In Epichloe species that produce only peramine, the peramine synthetase gene is not localized in a gene cluster, in contrast to Metarhizium species that contain additional pyrrolopyrazine biosynthesis genes. The 2-oxoglutarate-Fe(II) type oxidoreductase ppzC hydroxylates peramine to yield the newly identified compound 8-hydroxyperamine whereas ppzD converts L-proline into trans-4-hydroxy-L-proline, a precursor of peramine biosynthesis. The polypeptide is Cytochrome P450 monooxygenase ppzG (Metarhizium rileyi (strain RCEF 4871) (Nomuraea rileyi)).